The following is a 315-amino-acid chain: Calumenin (315 aa).

An N-terminal signal peptide occupies residues 1-19 (MDLRQFLMCLSLCTAFALS). The residue at position 47 (Tyr-47) is a Phosphotyrosine. At Thr-65 the chain carries Phosphothreonine. 6 EF-hand domains span residues 68–103 (ESKEKLGMIVDKIDTDKDGFVTEGELKSRIKHAQKK), 104–139 (YIYDNVENQWQEFDMNQDGLISWDEYRNVTYGTYLD), 151–186 (PIMVRDERRFKMADQDGDLIATKEEFTAFLHPEEYD), 188–223 (MKDIVLQETMEDIDQNADGFIDLEEYIGDMYSHDGN), 229–264 (WVKTEREQFVEFRDKNRDGKMDKEETKDWILPSDYD), and 265–300 (HAEAEARHLVYESDQDKDGKLTKEEIVDKYDLFVGS). Ser-69 bears the Phosphoserine mark. Positions 81, 83, 85, 92, 117, 119, 121, and 128 each coordinate Ca(2+). The N-linked (GlcNAc...) asparagine glycan is linked to Asn-131. Ca(2+) is bound by residues Asp-164, Asp-166, Asp-168, Glu-175, Asp-201, Asn-203, Asp-205, Glu-212, Asp-242, Asn-244, Asp-246, Lys-248, and Glu-253. Thr-254 bears the Phosphothreonine mark. Ser-261 and Ser-277 each carry phosphoserine. Ca(2+)-binding residues include Asp-278, Asp-280, Asp-282, Lys-284, and Glu-289. The short motif at 312-315 (HDEF) is the Prevents secretion from ER element.

Belongs to the CREC family. In terms of assembly, binds crotoxin. Interacts with GGCX.

It localises to the endoplasmic reticulum membrane. Its subcellular location is the golgi apparatus. The protein resides in the secreted. The protein localises to the melanosome. It is found in the sarcoplasmic reticulum lumen. Its function is as follows. Involved in regulation of vitamin K-dependent carboxylation of multiple N-terminal glutamate residues. Seems to inhibit gamma-carboxylase GGCX. Binds 7 calcium ions with a low affinity. This is Calumenin (Calu) from Rattus norvegicus (Rat).